Consider the following 603-residue polypeptide: DNA-directed RNA polymerase subunit beta' N-terminal section (603 aa).

Zn(2+)-binding residues include C283, C285, C329, and C332.

This sequence belongs to the RNA polymerase beta' chain family. RpoC1 subfamily. In plastids the minimal PEP RNA polymerase catalytic core is composed of four subunits: alpha, beta, beta', and beta''. When a (nuclear-encoded) sigma factor is associated with the core the holoenzyme is formed, which can initiate transcription. The cofactor is Zn(2+).

It localises to the plastid. Its subcellular location is the chloroplast. It catalyses the reaction RNA(n) + a ribonucleoside 5'-triphosphate = RNA(n+1) + diphosphate. Functionally, DNA-dependent RNA polymerase catalyzes the transcription of DNA into RNA using the four ribonucleoside triphosphates as substrates. The polypeptide is DNA-directed RNA polymerase subunit beta' N-terminal section (rpoC1A) (Chlamydomonas reinhardtii (Chlamydomonas smithii)).